Here is a 73-residue protein sequence, read N- to C-terminus: Putative defensin-like protein 57 (73 aa).

An N-terminal signal peptide occupies residues 1 to 25 (MRFTSMIFVLVVILINSLFNFNVLA). 4 disulfide bridges follow: cysteine 37-cysteine 71, cysteine 41-cysteine 64, cysteine 50-cysteine 69, and cysteine 54-cysteine 70.

The protein belongs to the DEFL family.

It localises to the secreted. This is Putative defensin-like protein 57 from Arabidopsis thaliana (Mouse-ear cress).